The primary structure comprises 367 residues: C-C chemokine receptor type 6 (367 aa).

The Extracellular portion of the chain corresponds to 1–39 (MNSTESYFGTDDYDNTEYYSIPPDHGPCSLEEVRNFTKV). N-linked (GlcNAc...) asparagine glycans are attached at residues N2 and N35. A helical membrane pass occupies residues 40 to 66 (FVPIAYSLICVFGLLGNIMVVMTFAFY). Residues 67–75 (KKARSMTDV) lie on the Cytoplasmic side of the membrane. Residues 76-96 (YLLNMAITDILFVLTLPFWAV) traverse the membrane as a helical segment. Topologically, residues 97 to 111 (THATNTWVFSDALCK) are extracellular. The cysteines at positions 110 and 189 are disulfide-linked. A helical transmembrane segment spans residues 112–133 (LMKGTYAVNFNCGMLLLACISM). Over 134 to 151 (DRYIAIVQATKSFRVRSR) the chain is Cytoplasmic. The helical transmembrane segment at 152-172 (TLTHSKVICVAVWFISIIISS) threads the bilayer. At 173 to 203 (PTFIFNKKYELQDRDVCEPRYRSVSEPITWK) the chain is on the extracellular side. Residues 204-230 (LLGMGLELFFGFFTPLLFMVFCYLFII) traverse the membrane as a helical segment. Over 231-246 (KTLVQAQNSKRHRAIR) the chain is Cytoplasmic. A helical transmembrane segment spans residues 247 to 271 (VVIAVVLVFLACQIPHNMVLLVTAV). Over 272–295 (NTGKVGRSCSTEKVLAYTRNVAEV) the chain is Extracellular. A helical membrane pass occupies residues 296–313 (LAFLHCCLNPVLYAFIGQ). The Cytoplasmic portion of the chain corresponds to 314–367 (KFRNYFMKIMKDVWCMRRKNKMPGFLCARVYSESYISRQTSETVENDNASSFTM).

It belongs to the G-protein coupled receptor 1 family. Sperm. Mainly localized in the principal piece and neck region of the tail but is also found in the acrosomal region in a small percentage of sperm cells. Expressed in natural regulatory T cells (nTregs) and a subset of early thymocyte progenitor double-negative 1 (DN1) cells. Expressed in memory B cells. Expressed by IL17 producing helper T-cells (Th17), type 1 effector cells (Th1), type 2 effector cells (Th2) and regulatory T-cells (Treg) (at protein level). Expressed by Th17 cells in spleen, Peyers patches, and lamina propria of small and large intestine. Highly expressed in testis, lung, colon, and dendritic cells.

The protein localises to the cell membrane. It localises to the cell surface. Receptor for the C-C type chemokine CCL20. Binds to CCL20 and subsequently transduces a signal by increasing the intracellular calcium ion levels. Although CCL20 is its major ligand it can also act as a receptor for non-chemokine ligands such as beta-defensins. Binds to defensin DEFB1 leading to increase in intracellular calcium ions and cAMP levels. Its binding to DEFB1 is essential for the function of DEFB1 in regulating sperm motility and bactericidal activity. Binds to defensins DEFB4 and DEFB4A/B and mediates their chemotactic effects. The ligand-receptor pair CCL20-CCR6 is responsible for the chemotaxis of dendritic cells (DC), effector/memory T-cells and B-cells and plays an important role at skin and mucosal surfaces under homeostatic and inflammatory conditions, as well as in pathology, including cancer and various autoimmune diseases. CCR6-mediated signals are essential for immune responses to microbes in the intestinal mucosa and in the modulation of inflammatory responses initiated by tissue insult and trauma. CCR6 is essential for the recruitment of both the pro-inflammatory IL17 producing helper T-cells (Th17) and the regulatory T-cells (Treg) to sites of inflammation. Required for the normal migration of Th17 cells in Peyers patches and other related tissue sites of the intestine and plays a role in regulating effector T-cell balance and distribution in inflamed intestine. Plays an important role in the coordination of early thymocyte precursor migration events important for normal subsequent thymocyte precursor development, but is not required for the formation of normal thymic natural regulatory T-cells (nTregs). Required for optimal differentiation of DN2 and DN3 thymocyte precursors. Essential for B-cell localization in the subepithelial dome of Peyers-patches and for efficient B-cell isotype switching to IgA in the Peyers-patches. Essential for appropriate anatomical distribution of memory B-cells in the spleen and for the secondary recall response of memory B-cells. Positively regulates sperm motility and chemotaxis via its binding to CCL20. In Mus musculus (Mouse), this protein is C-C chemokine receptor type 6 (Ccr6).